The following is a 549-amino-acid chain: Movement protein Hsp70h (549 aa).

The protein belongs to the heat shock protein 70 family.

The protein localises to the virion. Transports viral genome to neighboring plant cells directly through plasmosdesmata, without any budding. The movement protein allows efficient cell to cell propagation, by bypassing the host cell wall barrier. Two movement proteins, p6, Hsp70h and three structural proteins, CP, CPm, and P64 are essential for cell-cell movement. Also plays a role in virion formation. Together with CPm and p64, encapsidates the 5'-terminal portion of the viral genome. The chain is Movement protein Hsp70h from Vitis vinifera (Grape).